The following is a 367-amino-acid chain: Phosphoribosylaminoimidazole-succinocarboxamide synthase (367 aa).

It belongs to the SAICAR synthetase family.

It catalyses the reaction 5-amino-1-(5-phospho-D-ribosyl)imidazole-4-carboxylate + L-aspartate + ATP = (2S)-2-[5-amino-1-(5-phospho-beta-D-ribosyl)imidazole-4-carboxamido]succinate + ADP + phosphate + 2 H(+). Its pathway is purine metabolism; IMP biosynthesis via de novo pathway; 5-amino-1-(5-phospho-D-ribosyl)imidazole-4-carboxamide from 5-amino-1-(5-phospho-D-ribosyl)imidazole-4-carboxylate: step 1/2. The polypeptide is Phosphoribosylaminoimidazole-succinocarboxamide synthase (Shewanella sp. (strain W3-18-1)).